A 289-amino-acid polypeptide reads, in one-letter code: Xylosylprotein 4-beta-galactosyltransferase (289 aa).

Residues 1-6 (MKLKTR) lie on the Cytoplasmic side of the membrane. Residues 7–27 (LILSGTILISLAACYFLVLLV) traverse the membrane as a helical; Signal-anchor for type II membrane protein segment. Over 28–289 (LDLEITRDLM…DLNWTPYCKS (262 aa)) the chain is Lumenal. Residue 58–62 (PYRDR) coordinates UDP-alpha-D-galactose. N-linked (GlcNAc...) asparagine glycosylation is found at N81 and N90. UDP-alpha-D-galactose-binding positions include 97 to 99 (FNR), 123 to 124 (VD), Y154, and W184. D124 provides a ligand contact to Mn(2+). 186–189 (LEDD) is an N-acetyl-D-glucosamine binding site. N201 is a glycosylation site (N-linked (GlcNAc...) asparagine). The disordered stretch occupies residues 214 to 236 (NTFRHIHGPKRKRDYTPKKNDKN). Residues 217-226 (RHIHGPKRKR) are compositionally biased toward basic residues. Mn(2+) is bound at residue H218. A UDP-alpha-D-galactose-binding site is contributed by 218 to 220 (HIH). Residues 227–236 (DYTPKKNDKN) show a composition bias toward basic and acidic residues.

This sequence belongs to the glycosyltransferase 7 family. Mn(2+) is required as a cofactor.

The protein localises to the membrane. It carries out the reaction 3-O-(beta-D-xylosyl)-L-seryl-[protein] + UDP-alpha-D-galactose = 3-O-(beta-D-galactosyl-(1-&gt;4)-beta-D-xylosyl)-L-seryl-[protein] + UDP + H(+). It functions in the pathway protein modification; protein glycosylation. Functionally, glycosyltransferase required for the biosynthesis of the tetrasaccharide (GlcA-Gal-Gal-Xyl-)Ser core linker of heparan sulfate and chondroitin sulfate. Required for embryonic development. Involved in vulval epithelium invagination. Required for axon regeneration after injury. In Caenorhabditis elegans, this protein is Xylosylprotein 4-beta-galactosyltransferase (sqv-3).